Here is a 133-residue protein sequence, read N- to C-terminus: IgW chain C region, secreted form 2 (133 aa).

Residues valine 1–serine 71 form the Ig-like domain. Asparagine 32 and asparagine 112 each carry an N-linked (GlcNAc...) asparagine glycan. The interval lysine 76–lysine 133 is secretory tail.

As to expression, expressed mainly in lymphoid tissues including spleen, epigonal organ and circulating lymphocytes.

The protein localises to the secreted. This Heterodontus francisci (Horn shark) protein is IgW chain C region, secreted form 2.